The chain runs to 475 residues: D(1B) dopamine receptor (475 aa).

Topologically, residues 1 to 38 (MLPPGRNRTAQPARLGLQRQLAQVDAPAGSATPLGPAQ) are extracellular. An N-linked (GlcNAc...) asparagine glycan is attached at N7. The helical transmembrane segment at 39–64 (VVTAGLLTLLIVWTLLGNVLVCAAIV) threads the bilayer. Topologically, residues 65–75 (RSRHLRAKMTN) are cytoplasmic. Residues 76–102 (IFIVSLAVSDLFVALLVMPWKAVAEVA) form a helical membrane-spanning segment. The Extracellular segment spans residues 103 to 111 (GYWPFGTFC). A disulfide bridge links C111 with C211. The chain crosses the membrane as a helical span at residues 112-134 (DIWVAFDIMCSTASILNLCIISV). Topologically, residues 135–153 (DRYWAISRPFRYERKMTQR) are cytoplasmic. The helical transmembrane segment at 154–179 (VALVMVGLAWTLSILISFIPVQLNWH) threads the bilayer. Residues 180–215 (RDKAGSQGQEGLLSNGTPWEEGWELEGRTENCDSSL) are Extracellular-facing. The helical transmembrane segment at 216 to 240 (NRTYAISSSLISFYIPVAIMIVTYT) threads the bilayer. Residues 241-289 (RIYRIAQVQIRRISSLERAAEHAQSCRSRGAYEPDPSLRASIKKETKVF) lie on the Cytoplasmic side of the membrane. A helical membrane pass occupies residues 290-317 (KTLSMIMGVFVCCWLPFFILNCMVPFCS). The Extracellular portion of the chain corresponds to 318–335 (SGDAEGPKTGFPCVSETT). A helical membrane pass occupies residues 336–357 (FDIFVWFGWANSSLNPIIYAFN). Residues 358-475 (ADFRKVFAQL…LTPNCFDKTA (118 aa)) are Cytoplasmic-facing. Residue C370 is the site of S-palmitoyl cysteine attachment. The interval 415–443 (SGDREVGEEEEEGPFDHMSQISPTTPDGD) is disordered.

This sequence belongs to the G-protein coupled receptor 1 family. Brain, in the lateral mammillary nuclei, the anterior pretectal nuclei, and several layers of the hippocampus.

It is found in the cell membrane. Dopamine receptor whose activity is mediated by G proteins which activate adenylyl cyclase. In Rattus norvegicus (Rat), this protein is D(1B) dopamine receptor (Drd5).